The primary structure comprises 354 residues: UDP-3-O-acylglucosamine N-acyltransferase (354 aa).

The active-site Proton acceptor is the His258.

This sequence belongs to the transferase hexapeptide repeat family. LpxD subfamily. Homotrimer.

The enzyme catalyses a UDP-3-O-[(3R)-3-hydroxyacyl]-alpha-D-glucosamine + a (3R)-hydroxyacyl-[ACP] = a UDP-2-N,3-O-bis[(3R)-3-hydroxyacyl]-alpha-D-glucosamine + holo-[ACP] + H(+). It participates in bacterial outer membrane biogenesis; LPS lipid A biosynthesis. Functionally, catalyzes the N-acylation of UDP-3-O-acylglucosamine using 3-hydroxyacyl-ACP as the acyl donor. Is involved in the biosynthesis of lipid A, a phosphorylated glycolipid that anchors the lipopolysaccharide to the outer membrane of the cell. The polypeptide is UDP-3-O-acylglucosamine N-acyltransferase (Rhizobium meliloti (strain 1021) (Ensifer meliloti)).